A 225-amino-acid polypeptide reads, in one-letter code: 3-dehydroquinate dehydratase (225 aa).

3-dehydroquinate contacts are provided by residues glutamate 30–arginine 32 and arginine 62. The Proton donor/acceptor role is filled by histidine 118. The active-site Schiff-base intermediate with substrate is lysine 143. Positions 186 and 209 each coordinate 3-dehydroquinate.

It belongs to the type-I 3-dehydroquinase family. In terms of assembly, homodimer.

The catalysed reaction is 3-dehydroquinate = 3-dehydroshikimate + H2O. It functions in the pathway metabolic intermediate biosynthesis; chorismate biosynthesis; chorismate from D-erythrose 4-phosphate and phosphoenolpyruvate: step 3/7. In terms of biological role, involved in the third step of the chorismate pathway, which leads to the biosynthesis of aromatic amino acids. Catalyzes the cis-dehydration of 3-dehydroquinate (DHQ) and introduces the first double bond of the aromatic ring to yield 3-dehydroshikimate. The chain is 3-dehydroquinate dehydratase from Streptococcus agalactiae serotype Ia (strain ATCC 27591 / A909 / CDC SS700).